The sequence spans 161 residues: NAD(P)H-quinone oxidoreductase subunit I, chloroplastic (161 aa).

4Fe-4S ferredoxin-type domains lie at 55–84 (GRIH…VDWK) and 95–124 (LNYS…MTEE). [4Fe-4S] cluster contacts are provided by C64, C67, C70, C74, C104, C107, C110, and C114.

It belongs to the complex I 23 kDa subunit family. NDH is composed of at least 16 different subunits, 5 of which are encoded in the nucleus. [4Fe-4S] cluster is required as a cofactor.

Its subcellular location is the plastid. The protein resides in the chloroplast thylakoid membrane. The catalysed reaction is a plastoquinone + NADH + (n+1) H(+)(in) = a plastoquinol + NAD(+) + n H(+)(out). The enzyme catalyses a plastoquinone + NADPH + (n+1) H(+)(in) = a plastoquinol + NADP(+) + n H(+)(out). NDH shuttles electrons from NAD(P)H:plastoquinone, via FMN and iron-sulfur (Fe-S) centers, to quinones in the photosynthetic chain and possibly in a chloroplast respiratory chain. The immediate electron acceptor for the enzyme in this species is believed to be plastoquinone. Couples the redox reaction to proton translocation, and thus conserves the redox energy in a proton gradient. In Phaseolus vulgaris (Kidney bean), this protein is NAD(P)H-quinone oxidoreductase subunit I, chloroplastic.